Here is a 401-residue protein sequence, read N- to C-terminus: Tyrosine--tRNA ligase (401 aa).

The short motif at 45 to 54 is the 'HIGH' region element; sequence PTAPDLHLGH. The 'KMSKS' region signature appears at 230–234; it reads KMSKS. ATP is bound at residue Lys233. In terms of domain architecture, S4 RNA-binding spans 339 to 399; sequence IWLAKALVEC…GKRKFAKLKV (61 aa).

The protein belongs to the class-I aminoacyl-tRNA synthetase family. TyrS type 2 subfamily. As to quaternary structure, homodimer.

The protein resides in the cytoplasm. The catalysed reaction is tRNA(Tyr) + L-tyrosine + ATP = L-tyrosyl-tRNA(Tyr) + AMP + diphosphate + H(+). Catalyzes the attachment of tyrosine to tRNA(Tyr) in a two-step reaction: tyrosine is first activated by ATP to form Tyr-AMP and then transferred to the acceptor end of tRNA(Tyr). The chain is Tyrosine--tRNA ligase from Campylobacter jejuni (strain RM1221).